The primary structure comprises 379 residues: Chaperone protein DnaJ (379 aa).

Residues 5–69 (EYYERLGVDK…QKRAAYDQYG (65 aa)) enclose the J domain. A CR-type zinc finger spans residues 141–223 (GVEKQVKYNR…CHGSGHEKVA (83 aa)). The Zn(2+) site is built by Cys154, Cys157, Cys171, Cys174, Cys197, Cys200, Cys211, and Cys214. 4 CXXCXGXG motif repeats span residues 154-161 (CHTCGGSG), 171-178 (CHKCGGRG), 197-204 (CDVCNGTG), and 211-218 (CETCHGSG).

This sequence belongs to the DnaJ family. As to quaternary structure, homodimer. It depends on Zn(2+) as a cofactor.

It localises to the cytoplasm. Participates actively in the response to hyperosmotic and heat shock by preventing the aggregation of stress-denatured proteins and by disaggregating proteins, also in an autonomous, DnaK-independent fashion. Unfolded proteins bind initially to DnaJ; upon interaction with the DnaJ-bound protein, DnaK hydrolyzes its bound ATP, resulting in the formation of a stable complex. GrpE releases ADP from DnaK; ATP binding to DnaK triggers the release of the substrate protein, thus completing the reaction cycle. Several rounds of ATP-dependent interactions between DnaJ, DnaK and GrpE are required for fully efficient folding. Also involved, together with DnaK and GrpE, in the DNA replication of plasmids through activation of initiation proteins. This Lactococcus lactis subsp. lactis (strain IL1403) (Streptococcus lactis) protein is Chaperone protein DnaJ.